A 660-amino-acid chain; its full sequence is Alpha-1,2-mannosyltransferase MNN21 (660 aa).

Topologically, residues 1-17 (MFQQLTYRLRLFRRRHK) are cytoplasmic. A helical membrane pass occupies residues 18 to 38 (YIFINSIFLSVIIIFLIYSYW). Residues 39-660 (SNLPAEDNSA…FLESTQNITD (622 aa)) are Extracellular-facing. A disordered region spans residues 75–125 (PFEEKKPQVNPNNNQEVGVESGASEISQHKQQQQQQQHAKEPTTKTSSKSL). N657 carries an N-linked (GlcNAc...) asparagine glycan.

The protein belongs to the MNN1/MNT family.

The protein localises to the golgi apparatus membrane. The protein operates within protein modification; protein glycosylation. Its function is as follows. Alpha-1,2-mannosyltransferase required for cell wall integrity. Responsible for addition of the first alpha-1,2-linked mannose to form the branches on the mannan backbone of oligosaccharides. Addition of alpha-1,2-mannose is required for stabilization of the alpha-1,6-mannose backbone and hence regulates mannan fibril length; and is important for both immune recognition and virulence. The chain is Alpha-1,2-mannosyltransferase MNN21 (MNN21) from Candida albicans (strain SC5314 / ATCC MYA-2876) (Yeast).